The primary structure comprises 557 residues: Dihydroxy-acid dehydratase (557 aa).

C49 serves as a coordination point for [2Fe-2S] cluster. D81 provides a ligand contact to Mg(2+). C122 contributes to the [2Fe-2S] cluster binding site. Residues D123 and K124 each contribute to the Mg(2+) site. Position 124 is an N6-carboxylysine (K124). Residue C194 coordinates [2Fe-2S] cluster. E446 serves as a coordination point for Mg(2+). S472 serves as the catalytic Proton acceptor.

It belongs to the IlvD/Edd family. As to quaternary structure, homodimer. It depends on [2Fe-2S] cluster as a cofactor. Mg(2+) serves as cofactor.

The catalysed reaction is (2R)-2,3-dihydroxy-3-methylbutanoate = 3-methyl-2-oxobutanoate + H2O. It catalyses the reaction (2R,3R)-2,3-dihydroxy-3-methylpentanoate = (S)-3-methyl-2-oxopentanoate + H2O. The protein operates within amino-acid biosynthesis; L-isoleucine biosynthesis; L-isoleucine from 2-oxobutanoate: step 3/4. It functions in the pathway amino-acid biosynthesis; L-valine biosynthesis; L-valine from pyruvate: step 3/4. In terms of biological role, functions in the biosynthesis of branched-chain amino acids. Catalyzes the dehydration of (2R,3R)-2,3-dihydroxy-3-methylpentanoate (2,3-dihydroxy-3-methylvalerate) into 2-oxo-3-methylpentanoate (2-oxo-3-methylvalerate) and of (2R)-2,3-dihydroxy-3-methylbutanoate (2,3-dihydroxyisovalerate) into 2-oxo-3-methylbutanoate (2-oxoisovalerate), the penultimate precursor to L-isoleucine and L-valine, respectively. In Prochlorococcus marinus (strain MIT 9312), this protein is Dihydroxy-acid dehydratase.